The sequence spans 106 residues: UPF0145 protein APL_0465 (106 aa).

This sequence belongs to the UPF0145 family.

This Actinobacillus pleuropneumoniae serotype 5b (strain L20) protein is UPF0145 protein APL_0465.